The chain runs to 374 residues: Dual-specificity RNA methyltransferase RlmN (374 aa).

Residue E91 is the Proton acceptor of the active site. The region spanning 97–340 (EDDRGTLCVS…TTVRKTRGDD (244 aa)) is the Radical SAM core domain. A disulfide bridge links C104 with C345. [4Fe-4S] cluster is bound by residues C111, C115, and C118. S-adenosyl-L-methionine-binding positions include 166–167 (GE), S198, 220–222 (SLH), and N302. C345 serves as the catalytic S-methylcysteine intermediate.

This sequence belongs to the radical SAM superfamily. RlmN family. It depends on [4Fe-4S] cluster as a cofactor.

The protein localises to the cytoplasm. The enzyme catalyses adenosine(2503) in 23S rRNA + 2 reduced [2Fe-2S]-[ferredoxin] + 2 S-adenosyl-L-methionine = 2-methyladenosine(2503) in 23S rRNA + 5'-deoxyadenosine + L-methionine + 2 oxidized [2Fe-2S]-[ferredoxin] + S-adenosyl-L-homocysteine. It carries out the reaction adenosine(37) in tRNA + 2 reduced [2Fe-2S]-[ferredoxin] + 2 S-adenosyl-L-methionine = 2-methyladenosine(37) in tRNA + 5'-deoxyadenosine + L-methionine + 2 oxidized [2Fe-2S]-[ferredoxin] + S-adenosyl-L-homocysteine. Its function is as follows. Specifically methylates position 2 of adenine 2503 in 23S rRNA and position 2 of adenine 37 in tRNAs. m2A2503 modification seems to play a crucial role in the proofreading step occurring at the peptidyl transferase center and thus would serve to optimize ribosomal fidelity. The chain is Dual-specificity RNA methyltransferase RlmN from Delftia acidovorans (strain DSM 14801 / SPH-1).